A 232-amino-acid polypeptide reads, in one-letter code: uncharacterized protein (232 aa).

A compositionally biased stretch (basic and acidic residues) spans 86-95 (RGLPRPEFKA). Positions 86–107 (RGLPRPEFKANGHPSMDAEADD) are disordered.

This is an uncharacterized protein from Sinorhizobium fredii (strain NBRC 101917 / NGR234).